Reading from the N-terminus, the 1021-residue chain is Sodium/potassium-transporting ATPase subunit alpha-1 (1021 aa).

Positions 1–5 (MGKGA) are excised as a propeptide. The span at 1 to 11 (MGKGAGRDKYE) shows a compositional bias: basic and acidic residues. Positions 1–31 (MGKGAGRDKYEPTATSEHGTKKKKAKERDMD) are disordered. At 6–85 (GRDKYEPTAT…NTLTPPPTTP (80 aa)) the chain is on the cytoplasmic side. Tyr10 is modified (phosphotyrosine). A Phosphoserine; by PKC modification is found at Ser16. The tract at residues 80–82 (PPP) is phosphoinositide-3 kinase binding. Residues 86–106 (EWVKFCRQLFGGFSLLLWIGS) form a helical membrane-spanning segment. Residues 107–129 (LLCFLAYGITSVMEGEPNSDNLY) lie on the Extracellular side of the membrane. The chain crosses the membrane as a helical span at residues 130-150 (LGVVLAAVVIITGCFSYYQEA). At 151–286 (KSSKIMESFK…GGKTPIAMEI (136 aa)) the chain is on the cytoplasmic side. Residues 214 to 233 (SSLTGESEPQTRSPDFSNEN) form a disordered region. The chain crosses the membrane as a helical span at residues 287-306 (EHFIHLITGVAVFLGVSFFI). Over 307–318 (LSLILEYTWLEA) the chain is Extracellular. The chain crosses the membrane as a helical span at residues 319-336 (VIFLIGIIVANVPEGLLA). The Cytoplasmic portion of the chain corresponds to 337-770 (TVTVCLTLTA…EEGRLIFDNL (434 aa)). Catalysis depends on Asp374, which acts as the 4-aspartylphosphate intermediate. Lys485 provides a ligand contact to ATP. Mg(2+)-binding residues include Asp715 and Asp719. The helical transmembrane segment at 771–790 (KKSIAYTLTSNIPEITPFLI) threads the bilayer. The Extracellular portion of the chain corresponds to 791–800 (FIIANIPLPL). A helical membrane pass occupies residues 801–821 (GTCTILCIDLGTDMVPAISLA). Residues 822–841 (YEQAESDIMKRQPRNPKTDK) are Cytoplasmic-facing. The helical transmembrane segment at 842-864 (LVNERLISMAYGQIGMIQALGGF) threads the bilayer. Over 865 to 916 (FTYFVIMAENGFLPSGLVGIRLQWDDRWINDVEDSYGQQWTFEQRKIVEFTC) the chain is Extracellular. The chain crosses the membrane as a helical span at residues 917–936 (HTAFFVSIVVVQWADLIICK). At 937 to 949 (TRRNSVFQQGMKN) the chain is on the cytoplasmic side. Position 941 is a phosphoserine; by PKA (Ser941). The chain crosses the membrane as a helical span at residues 950–968 (KILIFGLFEETALAAFLSY). Residues 969-983 (CPGMDVALRMYPLKP) are Extracellular-facing. The chain crosses the membrane as a helical span at residues 984–1004 (TWWFCAFPYSLLIFLYDEIRK). At 1005–1021 (LIIRRNPGGWVERETYY) the chain is on the cytoplasmic side.

The protein belongs to the cation transport ATPase (P-type) (TC 3.A.3) family. Type IIC subfamily. As to quaternary structure, the sodium/potassium-transporting ATPase is composed of a catalytic alpha subunit, an auxiliary non-catalytic beta subunit and an additional regulatory subunit. Phosphorylation on Tyr-10 modulates pumping activity.

The protein resides in the cell membrane. Its subcellular location is the sarcolemma. The enzyme catalyses K(+)(out) + Na(+)(in) + ATP + H2O = K(+)(in) + Na(+)(out) + ADP + phosphate + H(+). This is the catalytic component of the active enzyme, which catalyzes the hydrolysis of ATP coupled with the exchange of sodium and potassium ions across the plasma membrane. This action creates the electrochemical gradient of sodium and potassium ions, providing the energy for active transport of various nutrients. This is Sodium/potassium-transporting ATPase subunit alpha-1 (ATP1A1) from Gallus gallus (Chicken).